A 532-amino-acid polypeptide reads, in one-letter code: 2,3-bisphosphoglycerate-independent phosphoglycerate mutase (532 aa).

2 residues coordinate Mn(2+): Asp-15 and Ser-65. Residue Ser-65 is the Phosphoserine intermediate of the active site. Residues His-126, 156–157 (RD), Arg-188, Arg-194, 258–261 (RPDR), and Lys-331 each bind substrate. Residues Asp-398, His-402, Asp-439, His-440, and His-457 each contribute to the Mn(2+) site.

Belongs to the BPG-independent phosphoglycerate mutase family. As to quaternary structure, monomer. Requires Mn(2+) as cofactor.

The enzyme catalyses (2R)-2-phosphoglycerate = (2R)-3-phosphoglycerate. Its pathway is carbohydrate degradation; glycolysis; pyruvate from D-glyceraldehyde 3-phosphate: step 3/5. Functionally, catalyzes the interconversion of 2-phosphoglycerate and 3-phosphoglycerate. The protein is 2,3-bisphosphoglycerate-independent phosphoglycerate mutase of Trichodesmium erythraeum (strain IMS101).